A 149-amino-acid polypeptide reads, in one-letter code: Small ribosomal subunit protein uS15 (149 aa).

The segment covering 1–11 (MARMHSRDRGK) has biased composition (basic and acidic residues). A disordered region spans residues 1–25 (MARMHSRDRGKSGSTRPPRVAPPSW).

It belongs to the universal ribosomal protein uS15 family. As to quaternary structure, part of the 30S ribosomal subunit.

This Methanopyrus kandleri (strain AV19 / DSM 6324 / JCM 9639 / NBRC 100938) protein is Small ribosomal subunit protein uS15.